The sequence spans 24 residues: Humanin-like 1 (24 aa).

This sequence belongs to the humanin family. Highly expressed in the kidney, heart muscle and testis.

The protein resides in the secreted. It is found in the cytoplasm. Plays a role as a neuroprotective and antiapoptotic factor. This is Humanin-like 1 from Homo sapiens (Human).